The primary structure comprises 360 residues: DNA replication and repair protein RecF (360 aa).

Residue 30–37 coordinates ATP; it reads GHNGSGKT.

The protein belongs to the RecF family.

The protein resides in the cytoplasm. In terms of biological role, the RecF protein is involved in DNA metabolism; it is required for DNA replication and normal SOS inducibility. RecF binds preferentially to single-stranded, linear DNA. It also seems to bind ATP. The protein is DNA replication and repair protein RecF of Actinobacillus pleuropneumoniae serotype 3 (strain JL03).